Consider the following 379-residue polypeptide: Wnt inhibitory factor 1 (379 aa).

Positions 1–28 (MARRRAFPAFALRLWSILPCLLLLRADA) are cleaved as a signal peptide. A WIF domain is found at 38-177 (LWIDAHQARV…PQNAIFFKTC (140 aa)). N-linked (GlcNAc...) asparagine glycosylation occurs at N88. 7 disulfides stabilise this stretch: C140–C177, C182–C192, C186–C198, C200–C209, C214–C224, C218–C230, and C232–C241. EGF-like domains lie at 178 to 210 (QQAE…PHCE), 211 to 242 (KALC…VNCD), 243 to 271 (KANC…LEGE), 274 to 306 (ELSK…DLCS), and 307 to 338 (KPVC…RHCN). N-linked (GlcNAc...) asparagine glycosylation occurs at N245. Disulfide bonds link C246–C256, C250–C262, C278–C288, C282–C294, C296–C305, C310–C320, C314–C326, and C328–C337. The segment at 348–379 (APRPAGAGLERHTPSLKKAEDRRDPPESNYIW) is disordered. Basic and acidic residues predominate over residues 356–373 (LERHTPSLKKAEDRRDPP).

As to quaternary structure, interacts with MYOC. As to expression, expression highest in heart and lung. Lower in brain and eye.

Its subcellular location is the secreted. Binds to WNT proteins and inhibits their activities. May be involved in mesoderm segmentation. The chain is Wnt inhibitory factor 1 (Wif1) from Mus musculus (Mouse).